A 196-amino-acid polypeptide reads, in one-letter code: Small ribosomal subunit protein uS4m (196 aa).

Residues 88 to 154 (KRLDVILVRL…FKSNIRKNFQ (67 aa)) form the S4 RNA-binding domain.

Belongs to the universal ribosomal protein uS4 family.

It is found in the mitochondrion. This is Small ribosomal subunit protein uS4m (RPS4) from Marchantia polymorpha (Common liverwort).